The sequence spans 119 residues: DNA-binding protein TubR (119 aa).

As to quaternary structure, homodimer. Binds to TubZ filaments via the C-terminus of TubZ. DNA is not required for binding to TubZ.

A DNA-binding protein that is part of the type III plasmid partition system used to ensure correct segregation of the pBc10987 plasmid. Binds TubZ filaments but does not influence the GTPase activity of TubZ with or without DNA. Cooperatively binds to multiple regions in tubC (centromere-like site) upstream of its own gene with consensus sequence N(T/A)ATTNC(C/G)GNAAT(A/T)N; probably forms an extended DNA-protein filament. Binds sites in its own promoter region and presumably represses its expression; its effect on RNA expression has not been shown. Does not specifically bind to the putative origin of replication on pBc10987. The polypeptide is DNA-binding protein TubR (Bacillus cereus (strain ATCC 10987 / NRS 248)).